Here is a 183-residue protein sequence, read N- to C-terminus: Ribosome rescue factor SmrB (183 aa).

In terms of domain architecture, Smr spans 98–173 (LDLHGLTQQQ…GDAALLVLIE (76 aa)).

This sequence belongs to the SmrB family. Associates with collided ribosomes, but not with correctly translating polysomes.

In terms of biological role, acts as a ribosome collision sensor. Detects stalled/collided disomes (pairs of ribosomes where the leading ribosome is stalled and a second ribosome has collided with it) and endonucleolytically cleaves mRNA at the 5' boundary of the stalled ribosome. Stalled/collided disomes form a new interface (primarily via the 30S subunits) that binds SmrB. Cleaved mRNA becomes available for tmRNA ligation, leading to ribosomal subunit dissociation and rescue of stalled ribosomes. This is Ribosome rescue factor SmrB from Klebsiella pneumoniae (strain 342).